We begin with the raw amino-acid sequence, 385 residues long: Rubredoxin-NAD(+) reductase (385 aa).

Residues 8 to 11, 32 to 33, isoleucine 79, glutamate 156, aspartate 275, and isoleucine 293 each bind FAD; these read AGTA and SR.

Belongs to the FAD-dependent oxidoreductase family. Homodimer. It depends on FAD as a cofactor.

The protein resides in the cytoplasm. It catalyses the reaction 2 reduced [rubredoxin] + NAD(+) + H(+) = 2 oxidized [rubredoxin] + NADH. The protein operates within hydrocarbon metabolism; alkane degradation. Involved in the hydrocarbon hydroxylating system, which transfers electrons from NADH to rubredoxin reductase and then through rubredoxin to alkane 1 monooxygenase. This Pseudomonas putida (Arthrobacter siderocapsulatus) protein is Rubredoxin-NAD(+) reductase (alkT).